We begin with the raw amino-acid sequence, 367 residues long: UDP-N-acetylglucosamine--N-acetylmuramyl-(pentapeptide) pyrophosphoryl-undecaprenol N-acetylglucosamine transferase (367 aa).

UDP-N-acetyl-alpha-D-glucosamine is bound by residues 11-13 (TAG), Asn125, Arg163, Ser197, and Gln289.

It belongs to the glycosyltransferase 28 family. MurG subfamily.

Its subcellular location is the cell membrane. The catalysed reaction is di-trans,octa-cis-undecaprenyl diphospho-N-acetyl-alpha-D-muramoyl-L-alanyl-D-glutamyl-meso-2,6-diaminopimeloyl-D-alanyl-D-alanine + UDP-N-acetyl-alpha-D-glucosamine = di-trans,octa-cis-undecaprenyl diphospho-[N-acetyl-alpha-D-glucosaminyl-(1-&gt;4)]-N-acetyl-alpha-D-muramoyl-L-alanyl-D-glutamyl-meso-2,6-diaminopimeloyl-D-alanyl-D-alanine + UDP + H(+). The protein operates within cell wall biogenesis; peptidoglycan biosynthesis. Cell wall formation. Catalyzes the transfer of a GlcNAc subunit on undecaprenyl-pyrophosphoryl-MurNAc-pentapeptide (lipid intermediate I) to form undecaprenyl-pyrophosphoryl-MurNAc-(pentapeptide)GlcNAc (lipid intermediate II). This Clavibacter sepedonicus (Clavibacter michiganensis subsp. sepedonicus) protein is UDP-N-acetylglucosamine--N-acetylmuramyl-(pentapeptide) pyrophosphoryl-undecaprenol N-acetylglucosamine transferase.